The sequence spans 514 residues: Periplasmic [NiFeSe] hydrogenase large subunit (514 aa).

Residue Glu52 coordinates Fe cation. 2 residues coordinate Ni(2+): Cys71 and Cys74. Residues Cys74 and Ile445 each coordinate Fe cation. Ni(2+) is bound by residues Sec493 and Cys496. A non-standard amino acid (selenocysteine) is located at residue Sec493. The Fe cation site is built by Cys496 and His499.

This sequence belongs to the [NiFe]/[NiFeSe] hydrogenase large subunit family. As to quaternary structure, heterodimer of a large and a small subunit. Fe cation serves as cofactor. It depends on Ni(2+) as a cofactor.

Its subcellular location is the periplasm. The catalysed reaction is H2 + A = AH2. This chain is Periplasmic [NiFeSe] hydrogenase large subunit, found in Desulfomicrobium baculatum (Desulfovibrio baculatus).